The primary structure comprises 431 residues: Isochorismate synthase MenF (431 aa).

The active-site Proton acceptor is the Lys-190. Glu-240 functions as the Proton donor in the catalytic mechanism. Residues Glu-284 and Glu-416 each contribute to the Mg(2+) site.

It belongs to the isochorismate synthase family. As to quaternary structure, homodimer. Requires Mg(2+) as cofactor.

The catalysed reaction is chorismate = isochorismate. Its pathway is quinol/quinone metabolism; 1,4-dihydroxy-2-naphthoate biosynthesis; 1,4-dihydroxy-2-naphthoate from chorismate: step 1/7. It participates in quinol/quinone metabolism; menaquinone biosynthesis. Its function is as follows. Catalyzes the conversion of chorismate to isochorismate. Can also catalyze the reverse reaction, but with a lower efficiency. The sequence is that of Isochorismate synthase MenF from Escherichia coli (strain K12).